Here is a 324-residue protein sequence, read N- to C-terminus: 1-deoxyxylulose-5-phosphate synthase YajO (324 aa).

Tyr61 functions as the Proton donor in the catalytic mechanism.

The protein belongs to the aldo/keto reductase family. Aldo/keto reductase 2 subfamily.

It catalyses the reaction D-ribulose 5-phosphate + AH2 = 1-deoxy-D-xylulose 5-phosphate + A + H2O. With respect to regulation, NADH, NADPH or ATP do not increase activity. Its function is as follows. Catalyzes the conversion of ribulose 5-phosphate (Ru5P) to 1-deoxy-D-xylulose 5-phosphate (DXP), providing a direct route from pentoses to terpenes. May play a role in biosynthesis of DXP under conditions of thiamine starvation. This chain is 1-deoxyxylulose-5-phosphate synthase YajO (yajO), found in Escherichia coli (strain K12).